The following is a 369-amino-acid chain: Protein RIC-3 (369 aa).

A signal peptide spans 1–28 (MAYSTVQRVALASGLVLALSLLLPKAFL). At 29–95 (SRGKRQEPPP…AGGGGSGRGL (67 aa)) the chain is on the lumenal side. The interval 30 to 67 (RGKRQEPPPTPEGKLGRFPPMMHHHQAPSDGQTPGARF) is disordered. Residues 96-116 (MGQIIPIYGFGIFLYILYILF) form a helical membrane-spanning segment. Residues 117–369 (KLSKGKTTAE…LRKRNPQGLE (253 aa)) lie on the Cytoplasmic side of the membrane. The stretch at 140–169 (RKITSFELAQLQEKLKETEAAMEKLINRVG) forms a coiled coil. Residue K202 is modified to N6-acetyllysine; alternate. A Glycyl lysine isopeptide (Lys-Gly) (interchain with G-Cter in ubiquitin); alternate cross-link involves residue K202. Disordered stretches follow at residues 272–295 (ESDH…SVTS) and 316–369 (LAEN…QGLE). Over residues 332-346 (ETTKEEWSQDFKDEG) the composition is skewed to basic and acidic residues. Basic residues predominate over residues 360–369 (LRKRNPQGLE).

The protein belongs to the ric-3 family. In terms of assembly, monomer and homodimer. Interacts with CHRNA7, CHRNA3, CHRNA4, CHRNB2, CHRNB4 and HTR3A. Broadly expressed, with high levels in muscle, brain, heart, pancreas and testis. In the central nervous system, highest levels are detected in the cerebellum and pituitary gland. Over-expressed in brains from patients with bipolar disease or schizophrenia. Isoform 5 is predominantly expressed in the brain.

The protein localises to the endoplasmic reticulum membrane. It localises to the golgi apparatus membrane. Molecular chaperone which facilitates proper subunit assembly and surface trafficking of alpha-7 (CHRNA7) and alpha-8 (CHRNA8) nicotinic acetylcholine receptors. May also promote functional expression of homomeric serotoninergic 5-HT3 receptors, and of heteromeric acetylcholine receptors alpha-3/beta-2, alpha-3/beta-4, alpha-4/beta-2 and alpha-4/beta-4. In Homo sapiens (Human), this protein is Protein RIC-3 (RIC3).